Here is a 66-residue protein sequence, read N- to C-terminus: Ocellatin-PT1 (66 aa).

An N-terminal signal peptide occupies residues 1–22; it reads MAFLKKSLFLVLFLGLVSLSIC. Residues 23–39 constitute a propeptide that is removed on maturation; that stretch reads DEEKRQDEDDDDDDDEE. At Val-66 the chain carries Valine amide.

Expressed by the skin glands.

It is found in the secreted. In terms of biological role, has antibacterial activity against Gram-negative bacterium E.coli ATCC 25922 (MIC=300 uM) but not against S.pneumoniae ATCC 700603, S.choleraesuis ATCC 14028 or Gram-positive bacterium S.aureus ATCC 29313. Shows virtually no hemolytic activity and no cytotoxicity. This chain is Ocellatin-PT1, found in Leptodactylus pustulatus (Ceara white-lipped frog).